A 379-amino-acid chain; its full sequence is Heme A synthase (379 aa).

The tract at residues 1–28 is disordered; it reads MAGSRSIFEEVQDSQKPAAMPGGVSRDR. 8 consecutive transmembrane segments (helical) span residues 35 to 55, 124 to 144, 150 to 170, 183 to 203, 227 to 247, 287 to 307, 318 to 338, and 341 to 361; these read VRVF…IGGL, FLGV…SVPV, LLLL…MVHS, RLAV…WYIL, ATGL…VAGI, FFHR…WIMA, AFDW…MTVM, and SPWY…TLIL. A heme-binding site is contributed by His289. His349 contacts heme.

It belongs to the COX15/CtaA family. Type 2 subfamily. In terms of assembly, interacts with CtaB. Heme b is required as a cofactor.

The protein localises to the cell membrane. It catalyses the reaction Fe(II)-heme o + 2 A + H2O = Fe(II)-heme a + 2 AH2. It participates in porphyrin-containing compound metabolism; heme A biosynthesis; heme A from heme O: step 1/1. Catalyzes the conversion of heme O to heme A by two successive hydroxylations of the methyl group at C8. The first hydroxylation forms heme I, the second hydroxylation results in an unstable dihydroxymethyl group, which spontaneously dehydrates, resulting in the formyl group of heme A. This is Heme A synthase from Jannaschia sp. (strain CCS1).